A 396-amino-acid polypeptide reads, in one-letter code: tRNA-specific 2-thiouridylase MnmA (396 aa).

Residues 42–49 (GMSGGVDS) and M68 contribute to the ATP site. An interaction with target base in tRNA region spans residues 128-130 (NPD). Catalysis depends on C133, which acts as the Nucleophile. An intrachain disulfide couples C133 to C230. G158 is a binding site for ATP. The segment at 180–182 (KDQ) is interaction with tRNA. C230 (cysteine persulfide intermediate) is an active-site residue. The interaction with tRNA stretch occupies residues 342–343 (RY).

Belongs to the MnmA/TRMU family.

It localises to the cytoplasm. The catalysed reaction is S-sulfanyl-L-cysteinyl-[protein] + uridine(34) in tRNA + AH2 + ATP = 2-thiouridine(34) in tRNA + L-cysteinyl-[protein] + A + AMP + diphosphate + H(+). In terms of biological role, catalyzes the 2-thiolation of uridine at the wobble position (U34) of tRNA, leading to the formation of s(2)U34. This is tRNA-specific 2-thiouridylase MnmA from Pseudoalteromonas atlantica (strain T6c / ATCC BAA-1087).